The primary structure comprises 150 residues: Deoxyuridine 5'-triphosphate nucleotidohydrolase (150 aa).

Substrate is bound by residues 69-71 (RSG), Asn82, 86-88 (LID), and Met96.

It belongs to the dUTPase family. It depends on Mg(2+) as a cofactor.

It catalyses the reaction dUTP + H2O = dUMP + diphosphate + H(+). The protein operates within pyrimidine metabolism; dUMP biosynthesis; dUMP from dCTP (dUTP route): step 2/2. This enzyme is involved in nucleotide metabolism: it produces dUMP, the immediate precursor of thymidine nucleotides and it decreases the intracellular concentration of dUTP so that uracil cannot be incorporated into DNA. This Leptothrix cholodnii (strain ATCC 51168 / LMG 8142 / SP-6) (Leptothrix discophora (strain SP-6)) protein is Deoxyuridine 5'-triphosphate nucleotidohydrolase.